The sequence spans 239 residues: LexA repressor (239 aa).

Positions 27-47 form a DNA-binding region, H-T-H motif; that stretch reads FDEMKDALDLASKSGIHRLIT. Residues serine 159 and lysine 197 each act as for autocatalytic cleavage activity in the active site.

Belongs to the peptidase S24 family. In terms of assembly, homodimer.

It catalyses the reaction Hydrolysis of Ala-|-Gly bond in repressor LexA.. Functionally, represses a number of genes involved in the response to DNA damage (SOS response), including recA and lexA. In the presence of single-stranded DNA, RecA interacts with LexA causing an autocatalytic cleavage which disrupts the DNA-binding part of LexA, leading to derepression of the SOS regulon and eventually DNA repair. This Rhizobium radiobacter (Agrobacterium tumefaciens) protein is LexA repressor.